Consider the following 500-residue polypeptide: uncharacterized protein (500 aa).

Over residues 1–13 (MEPSQRSGSFSSI) the composition is skewed to low complexity. The tract at residues 1–23 (MEPSQRSGSFSSISRRRSRVDSR) is disordered. Serine 9 is subject to Phosphoserine. Transmembrane regions (helical) follow at residues 87–107 (VSIA…AVAL), 126–146 (LVIG…LCFA), 156–176 (LYFR…LLYC), 183–203 (WIYL…TFLY), 225–245 (MNIL…GILA), 261–281 (VASW…IFFF), 312–332 (FLLF…NGYQ), 351–371 (GNFI…SSFL), 380–400 (IMLG…VLDA), 408–428 (VYFF…APLI), 445–465 (IVVQ…GGAI), and 471–491 (VGFI…LIFM).

This sequence belongs to the major facilitator superfamily.

The protein resides in the golgi apparatus. It is found in the membrane. This is an uncharacterized protein from Schizosaccharomyces pombe (strain 972 / ATCC 24843) (Fission yeast).